The following is a 465-amino-acid chain: WASH complex subunit 1 (465 aa).

The required for WASH complex assembly stretch occupies residues 1–54 (MTPVRMQHSLAGQTYAVPFIQPDLRREEAVQQMADALQYLQKVSGDIFSRISQQ). The interval 1-167 (MTPVRMQHSL…EGLGGLPSNI (167 aa)) is WHD1. Residue K220 forms a Glycyl lysine isopeptide (Lys-Gly) (interchain with G-Cter in ubiquitin) linkage. Disordered regions lie at residues 297 to 359 (QDGV…VDPS), 376 to 407 (GKAKLRSMKERKLEKQQQKEQEQVRATSQGGH), and 423 to 465 (ISGK…DWES). Residues 302-314 (TPPPPPPPPPPAP) are compositionally biased toward pro residues. The VCA stretch occupies residues 349–465 (QGAPREVVDP…AEEDEDDWES (117 aa)). Residues 361–383 (GWATLLESIRQAGGIGKAKLRSM) form the WH2 domain. Residues 382 to 398 (SMKERKLEKQQQKEQEQ) are compositionally biased toward basic and acidic residues. Gly residues predominate over residues 424-436 (SGKGPGAGEGPGG). Residues 456–465 (AEEDEDDWES) show a composition bias toward acidic residues.

The protein belongs to the WASH1 family. As to quaternary structure, component of the WASH core complex also described as WASH regulatory complex (SHRC) composed of WASH (WASHC1, WASH2P or WASH3P), WASHC2 (WASHC2A or WASHC2C), WASHC3, WASHC4 and WASHC5. The WASH core complex associates via WASHC2 with the F-actin-capping protein dimer (formed by CAPZA1, CAPZA2 or CAPZA3 and CAPZB) in a transient or substoichiometric manner which was initially described as WASH complex. Interacts (via WHD1 region) with WASHC2C; the interaction is direct. Interacts with VPS35; mediates the association with the retromer CSC complex. Interacts with FKBP15. Interacts with alpha-tubulin. Interacts with BECN1; this interaction can be competed out by AMBRA1 binding. Interacts with BLOC1S2; may associate with the BLOC-1 complex. Interacts with tubulin gamma chain (TUBG1 or TUBG2). Interacts with EXOC1, EXOC4, EXOC8; in MMP14-positive endosomes in breast tumor cells; indicative for an association with the exocyst complex. Interacts with TBC1D23. Post-translationally, ubiquitinated at Lys-220 via 'Lys-63'-linked ubiquitin chains by the TRIM27:MAGEL2 E3 ubiquitin ligase complex, leading to promote endosomal F-actin assembly.

It is found in the early endosome membrane. The protein resides in the recycling endosome membrane. Its subcellular location is the late endosome. The protein localises to the cytoplasmic vesicle. It localises to the autophagosome. It is found in the cytoplasm. The protein resides in the cytoskeleton. Its subcellular location is the microtubule organizing center. The protein localises to the centrosome. It localises to the centriole. Acts as a component of the WASH core complex that functions as a nucleation-promoting factor (NPF) at the surface of endosomes, where it recruits and activates the Arp2/3 complex to induce actin polymerization, playing a key role in the fission of tubules that serve as transport intermediates during endosome sorting. Involved in endocytic trafficking of EGF. Involved in transferrin receptor recycling. Regulates the trafficking of endosomal alpha5beta1 integrin to the plasma membrane and involved in invasive cell migration. In T-cells involved in endosome-to-membrane recycling of receptors including T-cell receptor (TCR), CD28 and ITGAL; proposed to be implicated in T cell proliferation and effector function. In dendritic cells involved in endosome-to-membrane recycling of major histocompatibility complex (MHC) class II probably involving retromer and subsequently allowing antigen sampling, loading and presentation during T-cell activation. Involved in Arp2/3 complex-dependent actin assembly driving Salmonella typhimurium invasion independent of ruffling. Involved in the exocytosis of MMP14 leading to matrix remodeling during invasive migration and implicating late endosome-to-plasma membrane tubular connections and cooperation with the exocyst complex. Involved in negative regulation of autophagy independently from its role in endosomal sorting by inhibiting BECN1 ubiquitination to inactivate PIK3C3/Vps34 activity. The protein is WASH complex subunit 1 of Homo sapiens (Human).